The sequence spans 97 residues: Cobalt transport protein CbiN (97 aa).

2 helical membrane passes run 6-26 (VLMI…YSGL) and 68-88 (SLLF…FFGY).

The protein belongs to the CbiN family. Forms an energy-coupling factor (ECF) transporter complex composed of an ATP-binding protein (A component, CbiO), a transmembrane protein (T component, CbiQ) and 2 possible substrate-capture proteins (S components, CbiM and CbiN) of unknown stoichimetry.

It localises to the cell membrane. Its pathway is cofactor biosynthesis; adenosylcobalamin biosynthesis. In terms of biological role, part of the energy-coupling factor (ECF) transporter complex CbiMNOQ involved in cobalt import. The chain is Cobalt transport protein CbiN from Methanococcus maripaludis (strain C6 / ATCC BAA-1332).